The chain runs to 250 residues: 2,3-bisphosphoglycerate-dependent phosphoglycerate mutase (250 aa).

Substrate-binding positions include 10–17 (RHGESQWN), 23–24 (TG), Arg-62, 89–92 (ERHY), Lys-100, 116–117 (RR), and 185–186 (GN). The Tele-phosphohistidine intermediate role is filled by His-11. Glu-89 functions as the Proton donor/acceptor in the catalytic mechanism.

This sequence belongs to the phosphoglycerate mutase family. BPG-dependent PGAM subfamily. In terms of assembly, homodimer.

The catalysed reaction is (2R)-2-phosphoglycerate = (2R)-3-phosphoglycerate. It participates in carbohydrate degradation; glycolysis; pyruvate from D-glyceraldehyde 3-phosphate: step 3/5. Its function is as follows. Catalyzes the interconversion of 2-phosphoglycerate and 3-phosphoglycerate. This is 2,3-bisphosphoglycerate-dependent phosphoglycerate mutase from Salmonella choleraesuis (strain SC-B67).